A 364-amino-acid polypeptide reads, in one-letter code: Probable UDP-arabinopyranose mutase 1 (364 aa).

The DXD motif motif lies at 110–112 (DDD). Arg-158 is a glycosylation site (N-linked (Glc...) arginine).

It belongs to the RGP family. In terms of assembly, homopentamer or homohexamer. Mn(2+) is required as a cofactor. The cofactor is Mg(2+). Post-translationally, reversibly glycosylated by UDP-glucose, UDP-xylose and UDP-galactose.

It localises to the secreted. Its subcellular location is the cell wall. It is found in the cell junction. The protein resides in the plasmodesma. The protein localises to the golgi apparatus. It catalyses the reaction UDP-beta-L-arabinofuranose = UDP-beta-L-arabinopyranose. In terms of biological role, probable UDP-L-arabinose mutase involved in the biosynthesis of cell wall non-cellulosic polysaccharides. Was initially shown to possess an autoglycosylating activity which is dependent on the presence of UDP-glucose and manganese. In Zea mays (Maize), this protein is Probable UDP-arabinopyranose mutase 1.